The sequence spans 876 residues: Leucine--tRNA ligase (876 aa).

The 'HIGH' region motif lies at 43–53; the sequence is PYPSGRIHMGH. The short motif at 632–636 is the 'KMSKS' region element; it reads KMSKS. ATP is bound at residue Lys-635.

Belongs to the class-I aminoacyl-tRNA synthetase family.

It is found in the cytoplasm. It catalyses the reaction tRNA(Leu) + L-leucine + ATP = L-leucyl-tRNA(Leu) + AMP + diphosphate. The sequence is that of Leucine--tRNA ligase from Sinorhizobium fredii (strain NBRC 101917 / NGR234).